A 218-amino-acid chain; its full sequence is Capsid protein (218 aa).

Met-1 bears the N-acetylmethionine; by host mark. Positions 1–10 are enriched in low complexity; sequence MDKSDSASAG. The segment at 1–28 is disordered; it reads MDKSDSASAGRNRRRRPRRGSRSASSSA. The span at 11 to 21 shows a compositional bias: basic residues; it reads RNRRRRPRRGS.

This sequence belongs to the cucumovirus capsid protein family.

The protein resides in the virion. Capsid protein. Probably binds RNA and plays a role in packaging. The polypeptide is Capsid protein (Cucumber mosaic virus (strain M48) (CMV)).